A 71-amino-acid chain; its full sequence is Disintegrin applaggin (71 aa).

Residues 1–71 (EAGEECDCGS…SAGCPRNPFH (71 aa)) form the Disintegrin domain. Intrachain disulfides connect cysteine 6–cysteine 21, cysteine 8–cysteine 16, cysteine 15–cysteine 38, cysteine 29–cysteine 35, cysteine 34–cysteine 58, and cysteine 47–cysteine 65. The Cell attachment site motif lies at 50–52 (RGD).

This sequence belongs to the venom metalloproteinase (M12B) family. P-II subfamily. P-IIa sub-subfamily. In terms of assembly, monomer (disintegrin). Expressed by the venom gland.

It is found in the secreted. In terms of biological role, inhibits fibrinogen interaction with platelets. Acts by binding to alpha-IIb/beta-3 (ITGA2B/ITGB3) on the platelet surface and inhibits aggregation induced by ADP, thrombin, platelet-activating factor and collagen. In Agkistrodon piscivorus piscivorus (Eastern cottonmouth), this protein is Disintegrin applaggin.